Consider the following 437-residue polypeptide: MNLSLFTLALVACYSSQLAAAHTVFTTLFVNDVSQGDGTCVRMPSDPSTATFPINDLDSDSMACGFNGTRGVERVCAVNQTAKLSFLFREYADASQQGAIDPNHKGPCAVYMKRVASAINDTAVGSGWFKIWDEGYDNSTQKWCTEKLIQNNGYLSINIPSDLAGGYYLARPELLALHQADKNPPNPQFYTGCAQIYLDSAETAIPKDTVNIPGYVNIHSPSVLYNIWNPPPTPYTMAGPAPYQPGISSISNTTGSKAAKFSAYTAQQNEGLLPQDAAITNANWWGVEVASYTTEAGCWDASSDCWNQTTVCYDCAPPTGDKGCREWEAHCTAIQKGCEGGSFTGPPVIVKTEGAMTMAMTATIAPAAEQTGGVYAASSTVVSVGSLGVSEDGKCGDGNGQTCKGSLLGECCSQVGYCGSSESYCGVGCQGNFGVCG.

The first 21 residues, 1–21, serve as a signal peptide directing secretion; the sequence is MNLSLFTLALVACYSSQLAAA. Residue histidine 22 participates in Cu(2+) binding. Cysteine 64 and cysteine 193 are disulfide-bonded. N-linked (GlcNAc...) asparagine glycans are attached at residues asparagine 67 and asparagine 79. Histidine 104 is a Cu(2+) binding site. Residues asparagine 120 and asparagine 138 are each glycosylated (N-linked (GlcNAc...) asparagine). Histidine 178 and glutamine 188 together coordinate O2. Tyrosine 190 contacts Cu(2+). Residues asparagine 252 and asparagine 307 are each glycosylated (N-linked (GlcNAc...) asparagine). The 46-residue stretch at 392–437 folds into the Chitin-binding type-1 domain; the sequence is DGKCGDGNGQTCKGSLLGECCSQVGYCGSSESYCGVGCQGNFGVCG. 4 cysteine pairs are disulfide-bonded: cysteine 395–cysteine 412, cysteine 403–cysteine 418, cysteine 411–cysteine 425, and cysteine 429–cysteine 436.

This sequence belongs to the polysaccharide monooxygenase AA9 family. The cofactor is Cu(2+).

It localises to the secreted. The enzyme catalyses [(1-&gt;4)-beta-D-glucosyl]n+m + reduced acceptor + O2 = 4-dehydro-beta-D-glucosyl-[(1-&gt;4)-beta-D-glucosyl]n-1 + [(1-&gt;4)-beta-D-glucosyl]m + acceptor + H2O.. Lytic polysaccharide monooxygenase (LPMO) that depolymerizes crystalline and amorphous polysaccharides via the oxidation of scissile alpha- or beta-(1-4)-glycosidic bonds, yielding C1 and C4 oxidation products. Catalysis by LPMOs requires the reduction of the active-site copper from Cu(II) to Cu(I) by a reducing agent and H(2)O(2) or O(2) as a cosubstrate. This chain is AA9 family lytic polysaccharide monooxygenase H, found in Botryotinia fuckeliana (strain B05.10) (Noble rot fungus).